A 200-amino-acid chain; its full sequence is Charged multivesicular body protein 6-B (200 aa).

Glycine 2 is lipidated: N-myristoyl glycine. Residues 9–102 (RRSRVTEQDK…FAQIEMKVIE (94 aa)) are a coiled coil. The disordered stretch occupies residues 165–200 (QEDLELPEAPSEPLSDTVPEKQAVKNRPKPQLVAAS). The short motif at 168–179 (LELPEAPSEPLS) is the Type-2 MIT-interacting motif element.

The protein belongs to the SNF7 family. Probable core component of the endosomal sorting required for transport complex III (ESCRT-III). ESCRT-III components are thought to multimerize to form a flat lattice on the perimeter membrane of the endosome.

It localises to the endomembrane system. The protein localises to the late endosome membrane. Its function is as follows. Probable core component of the endosomal sorting required for transport complex III (ESCRT-III) which is involved in multivesicular bodies (MVBs) formation and sorting of endosomal cargo proteins into MVBs. MVBs contain intraluminal vesicles (ILVs) that are generated by invagination and scission from the limiting membrane of the endosome and mostly are delivered to lysosomes enabling degradation of membrane proteins, such as stimulated growth factor receptors, lysosomal enzymes and lipids. In the ESCRT-III complex, it probably serves as an acceptor for the ESCRT-II complex on endosomal membranes. This is Charged multivesicular body protein 6-B (chmp6-b) from Xenopus laevis (African clawed frog).